We begin with the raw amino-acid sequence, 245 residues long: 1-(5-phosphoribosyl)-5-[(5-phosphoribosylamino)methylideneamino] imidazole-4-carboxamide isomerase (245 aa).

The active-site Proton acceptor is the aspartate 8. Aspartate 130 acts as the Proton donor in catalysis.

The protein belongs to the HisA/HisF family.

Its subcellular location is the cytoplasm. The catalysed reaction is 1-(5-phospho-beta-D-ribosyl)-5-[(5-phospho-beta-D-ribosylamino)methylideneamino]imidazole-4-carboxamide = 5-[(5-phospho-1-deoxy-D-ribulos-1-ylimino)methylamino]-1-(5-phospho-beta-D-ribosyl)imidazole-4-carboxamide. It participates in amino-acid biosynthesis; L-histidine biosynthesis; L-histidine from 5-phospho-alpha-D-ribose 1-diphosphate: step 4/9. The chain is 1-(5-phosphoribosyl)-5-[(5-phosphoribosylamino)methylideneamino] imidazole-4-carboxamide isomerase from Pseudomonas syringae pv. tomato (strain ATCC BAA-871 / DC3000).